We begin with the raw amino-acid sequence, 314 residues long: Olfactory receptor 2Z1 (314 aa).

At 1–25 the chain is on the extracellular side; sequence MGDVNQSVASDFILVGLFSHSGSRQ. Residue Asn-5 is glycosylated (N-linked (GlcNAc...) asparagine). The chain crosses the membrane as a helical span at residues 26 to 49; it reads LLFSLVAVMFVIGLLGNTVLLFLI. Residues 50-57 are Cytoplasmic-facing; that stretch reads RVDSRLHT. The helical transmembrane segment at 58–79 threads the bilayer; it reads PMYFLLSQLSLFDIGCPMVTIP. The Extracellular segment spans residues 80–100; the sequence is KMASDFLRGEGATSYGGGAAQ. A helical membrane pass occupies residues 101-120; that stretch reads IFFLTLMGVAEGVLLVLMSY. The Cytoplasmic portion of the chain corresponds to 121-139; sequence DRYVAVCQPLQYPVLMRRQ. A helical transmembrane segment spans residues 140 to 158; that stretch reads VCLLMMGSSWVVGVLNASI. Over 159–195 the chain is Extracellular; sequence QTSITLHFPYCASRIVDHFFCEVPALLKLSCADTCAY. A helical membrane pass occupies residues 196-219; the sequence is EMALSTSGVLILMLPLSLIATSYG. Residues 220-236 are Cytoplasmic-facing; that stretch reads HVLQAVLSMRSEEARHK. A helical membrane pass occupies residues 237–259; sequence AVTTCSSHITVVGLFYGAAVFMY. Residues 260-272 are Extracellular-facing; it reads MVPCAYHSPQQDN. A helical membrane pass occupies residues 273–292; that stretch reads VVSLFYSLVTPTLNPLIYSL. The Cytoplasmic segment spans residues 293–314; that stretch reads RNPEVWMALVKVLSRAGLRQMC.

It belongs to the G-protein coupled receptor 1 family.

Its subcellular location is the cell membrane. Functionally, odorant receptor. The polypeptide is Olfactory receptor 2Z1 (OR2Z1) (Homo sapiens (Human)).